Here is a 129-residue protein sequence, read N- to C-terminus: Small ribosomal subunit protein uS11 (129 aa).

It belongs to the universal ribosomal protein uS11 family. In terms of assembly, part of the 30S ribosomal subunit. Interacts with proteins S7 and S18. Binds to IF-3.

Its function is as follows. Located on the platform of the 30S subunit, it bridges several disparate RNA helices of the 16S rRNA. Forms part of the Shine-Dalgarno cleft in the 70S ribosome. The sequence is that of Small ribosomal subunit protein uS11 from Bartonella quintana (strain Toulouse) (Rochalimaea quintana).